Here is a 349-residue protein sequence, read N- to C-terminus: DNA polymerase IV (349 aa).

The region spanning 4–185 (IIHIDCDCFY…LPVAKLHGVG (182 aa)) is the UmuC domain. Mg(2+) contacts are provided by aspartate 8 and aspartate 103. Glutamate 104 is an active-site residue.

It belongs to the DNA polymerase type-Y family. In terms of assembly, monomer. It depends on Mg(2+) as a cofactor.

It is found in the cytoplasm. It carries out the reaction DNA(n) + a 2'-deoxyribonucleoside 5'-triphosphate = DNA(n+1) + diphosphate. Functionally, poorly processive, error-prone DNA polymerase involved in untargeted mutagenesis. Copies undamaged DNA at stalled replication forks, which arise in vivo from mismatched or misaligned primer ends. These misaligned primers can be extended by PolIV. Exhibits no 3'-5' exonuclease (proofreading) activity. May be involved in translesional synthesis, in conjunction with the beta clamp from PolIII. The chain is DNA polymerase IV from Pseudomonas aeruginosa (strain UCBPP-PA14).